We begin with the raw amino-acid sequence, 366 residues long: Ribosomal RNA small subunit methyltransferase H 1 (366 aa).

The segment at 1–46 (MADQNINKNEKVLTGQPTENQEPVHKRRERYKGTHPKTFKEKYKER) is disordered. The span at 25–37 (HKRRERYKGTHPK) shows a compositional bias: basic residues. S-adenosyl-L-methionine contacts are provided by residues 97 to 99 (GGH), D117, F147, D166, and Q173.

Belongs to the methyltransferase superfamily. RsmH family.

It is found in the cytoplasm. It catalyses the reaction cytidine(1402) in 16S rRNA + S-adenosyl-L-methionine = N(4)-methylcytidine(1402) in 16S rRNA + S-adenosyl-L-homocysteine + H(+). In terms of biological role, specifically methylates the N4 position of cytidine in position 1402 (C1402) of 16S rRNA. The polypeptide is Ribosomal RNA small subunit methyltransferase H 1 (Lachnoclostridium phytofermentans (strain ATCC 700394 / DSM 18823 / ISDg) (Clostridium phytofermentans)).